The sequence spans 60 residues: Ras-related protein Rab-2A (60 aa).

The GTP site is built by Ser1, Cys2, and Thr19. Ser1 is a binding site for Mg(2+). The short motif at 16 to 24 is the Effector region element; that stretch reads HDLTIGVEF. Thr19 provides a ligand contact to Mg(2+).

This sequence belongs to the small GTPase superfamily. Rab family. In terms of assembly, interacts with PRKCI. Interacts with TRIP11. Interacts (in GTP-bound form) with GARIN1B. Interacts (GTP-bound) with HOPS complex component VPS39; interaction contributes to obtaining a functional HOPS complex that promotes autophagosome-lysosome membrane fusion driven by STX17-SNAP29-VAMP8. May interact with VPS41. It depends on Mg(2+) as a cofactor. In terms of processing, prenylated. Prenylation is required for association with cellular membranes.

The protein resides in the endoplasmic reticulum-Golgi intermediate compartment membrane. It is found in the melanosome. The protein localises to the endoplasmic reticulum membrane. Its subcellular location is the golgi apparatus membrane. It localises to the cytoplasmic vesicle. The protein resides in the secretory vesicle. It is found in the acrosome. The protein localises to the autophagosome membrane. The enzyme catalyses GTP + H2O = GDP + phosphate + H(+). With respect to regulation, regulated by guanine nucleotide exchange factors (GEFs) which promote the exchange of bound GDP for free GTP, GTPase activating proteins (GAPs) which increase the GTP hydrolysis activity, and GDP dissociation inhibitors (GDIs) which inhibit the dissociation of the nucleotide from the GTPase. Its function is as follows. The small GTPases Rab are key regulators of intracellular membrane trafficking, from the formation of transport vesicles to their fusion with membranes. Rabs cycle between active GTP-bound and inactive GDP-bound states. In their active state, drive transport of vesicular carriers from donor organelles to acceptor organelles to regulate the membrane traffic that maintains organelle identity and morphology. RAB2A regulates autophagy by promoting autophagosome-lysosome fusion via recruitment of the HOPS endosomal tethering complex; this process involves autophagosomal RAB2A and lysosomal RAB39A recruitment of HOPS subcomplexes VPS39-VPS11 and VPS41-VPS16-VPS18-VPS33A, respectively, which assemble into a functional complex to mediate membrane tethering and SNAREs-driven membrane fusion. Required for protein transport from the endoplasmic reticulum to the Golgi complex. Regulates the compacted morphology of the Golgi. Together with RAB2B, redundantly required for efficient autophagic flux. The polypeptide is Ras-related protein Rab-2A (Mesocricetus auratus (Golden hamster)).